The following is a 486-amino-acid chain: F-box protein At1g80960 (486 aa).

Residues 49–97 enclose the F-box domain; it reads VDWISKLPDDVLLIILSRLSTEEAIRTSVVSKRWEHVWNQMSHLVFDMR.

In Arabidopsis thaliana (Mouse-ear cress), this protein is F-box protein At1g80960.